Here is a 428-residue protein sequence, read N- to C-terminus: Enolase (428 aa).

Gln163 is a (2R)-2-phosphoglycerate binding site. Glu205 acts as the Proton donor in catalysis. Positions 242, 285, and 312 each coordinate Mg(2+). Residues Lys337, Arg366, Ser367, and Lys388 each contribute to the (2R)-2-phosphoglycerate site. Residue Lys337 is the Proton acceptor of the active site.

It belongs to the enolase family. Mg(2+) serves as cofactor.

It is found in the cytoplasm. Its subcellular location is the secreted. The protein resides in the cell surface. The catalysed reaction is (2R)-2-phosphoglycerate = phosphoenolpyruvate + H2O. The protein operates within carbohydrate degradation; glycolysis; pyruvate from D-glyceraldehyde 3-phosphate: step 4/5. Functionally, catalyzes the reversible conversion of 2-phosphoglycerate (2-PG) into phosphoenolpyruvate (PEP). It is essential for the degradation of carbohydrates via glycolysis. In Neisseria meningitidis serogroup A / serotype 4A (strain DSM 15465 / Z2491), this protein is Enolase.